A 150-amino-acid polypeptide reads, in one-letter code: Probable FKBP-type 16 kDa peptidyl-prolyl cis-trans isomerase (150 aa).

The 75-residue stretch at 14-88 (NTEVTLHFAL…PNPQNVQIIP (75 aa)) folds into the PPIase FKBP-type domain.

Belongs to the FKBP-type PPIase family.

It carries out the reaction [protein]-peptidylproline (omega=180) = [protein]-peptidylproline (omega=0). Its function is as follows. PPIases accelerate the folding of proteins. The chain is Probable FKBP-type 16 kDa peptidyl-prolyl cis-trans isomerase (yaaD) from Pseudomonas fluorescens.